Consider the following 496-residue polypeptide: Transactivator/viroplasmin protein (496 aa).

The interval 102–128 is disordered; it reads RPNQGIQIPKKNEDHSSSSSKEEKGIQ. The segment covering 111–128 has biased composition (basic and acidic residues); the sequence is KKNEDHSSSSSKEEKGIQ.

The protein belongs to the caulimoviridae viroplasmin family.

The protein resides in the host cytoplasm. Its function is as follows. Enhances the translation of downstream ORFs on polycistronic mRNAs derived from carnation etched ring virus. In Dianthus caryophyllus (Carnation), this protein is Transactivator/viroplasmin protein.